The sequence spans 417 residues: 3-oxoacyl-[acyl-carrier-protein] synthase 2 (417 aa).

The Ketosynthase family 3 (KS3) domain maps to 10–416; the sequence is FPYVVVTGIA…GHNVAIAFGR (407 aa). Residues C170, H311, and H346 each act as for beta-ketoacyl synthase activity in the active site.

It belongs to the thiolase-like superfamily. Beta-ketoacyl-ACP synthases family.

The protein resides in the cytoplasm. The catalysed reaction is an ultra-long-chain di-unsaturated fatty acyl-[ACP] + malonyl-[ACP] + H(+) = a 3-oxo-ultra-long-chain di-unsaturated fatty acyl-[ACP] + holo-[ACP] + CO2. It participates in lipid metabolism; mycolic acid biosynthesis. In terms of biological role, part of the mycobacterial fatty acid elongation system FAS-II, which is involved in mycolic acid biosynthesis. Catalyzes the elongation of long chain acyl-ACP substrates by the addition of two carbons from malonyl-ACP to an acyl acceptor. Involved in extension of the mycolate chains to full lengths and produces longer chain multiunsaturated hydrocarbons averaging 54 carbons in length. The sequence is that of 3-oxoacyl-[acyl-carrier-protein] synthase 2 (kasB) from Mycobacterium bovis (strain ATCC BAA-935 / AF2122/97).